Reading from the N-terminus, the 91-residue chain is Aspartyl/glutamyl-tRNA(Asn/Gln) amidotransferase subunit C (91 aa).

The interval 68-91 (LDQDDALANAPETEDGRFKGPNVS) is disordered.

Belongs to the GatC family. In terms of assembly, heterotrimer of A, B and C subunits.

It carries out the reaction L-glutamyl-tRNA(Gln) + L-glutamine + ATP + H2O = L-glutaminyl-tRNA(Gln) + L-glutamate + ADP + phosphate + H(+). The enzyme catalyses L-aspartyl-tRNA(Asn) + L-glutamine + ATP + H2O = L-asparaginyl-tRNA(Asn) + L-glutamate + ADP + phosphate + 2 H(+). Functionally, allows the formation of correctly charged Asn-tRNA(Asn) or Gln-tRNA(Gln) through the transamidation of misacylated Asp-tRNA(Asn) or Glu-tRNA(Gln) in organisms which lack either or both of asparaginyl-tRNA or glutaminyl-tRNA synthetases. The reaction takes place in the presence of glutamine and ATP through an activated phospho-Asp-tRNA(Asn) or phospho-Glu-tRNA(Gln). This chain is Aspartyl/glutamyl-tRNA(Asn/Gln) amidotransferase subunit C, found in Halobacterium salinarum (strain ATCC 29341 / DSM 671 / R1).